The primary structure comprises 1296 residues: DNA-directed RNA polymerase subunit beta' (1296 aa).

Residues Cys-60, Cys-62, Cys-75, and Cys-78 each contribute to the Zn(2+) site. A compositionally biased stretch (basic and acidic residues) spans 185-202; the sequence is EEEGGKAAEKRKLRDSAD. The tract at residues 185 to 204 is disordered; the sequence is EEEGGKAAEKRKLRDSADRQ. Mg(2+)-binding residues include Asp-535, Asp-537, and Asp-539. Residues Cys-877, Cys-954, Cys-961, and Cys-964 each contribute to the Zn(2+) site.

It belongs to the RNA polymerase beta' chain family. In terms of assembly, the RNAP catalytic core consists of 2 alpha, 1 beta, 1 beta' and 1 omega subunit. When a sigma factor is associated with the core the holoenzyme is formed, which can initiate transcription. It depends on Mg(2+) as a cofactor. Zn(2+) serves as cofactor.

The catalysed reaction is RNA(n) + a ribonucleoside 5'-triphosphate = RNA(n+1) + diphosphate. Its function is as follows. DNA-dependent RNA polymerase catalyzes the transcription of DNA into RNA using the four ribonucleoside triphosphates as substrates. The sequence is that of DNA-directed RNA polymerase subunit beta' from Kocuria rhizophila (strain ATCC 9341 / DSM 348 / NBRC 103217 / DC2201).